Reading from the N-terminus, the 197-residue chain is OV-16 antigen (197 aa).

The signal sequence occupies residues 1 to 16 (MHCLQVVIAIVLYSFG). N-linked (GlcNAc...) asparagine glycans are attached at residues Asn56, Asn61, Asn119, and Asn124.

This sequence belongs to the phosphatidylethanolamine-binding protein family. As to expression, hypodermis, cuticle and uterus.

The sequence is that of OV-16 antigen (OV16) from Onchocerca volvulus.